A 454-amino-acid chain; its full sequence is GA-binding protein alpha chain (454 aa).

A PNT domain is found at 168 to 251 (AALEGYRKEQ…SHLELLRKYV (84 aa)). A disordered region spans residues 297–316 (QRAPRISGEDRSSPGNRTGN). The residue at position 303 (serine 303) is a Phosphoserine. Positions 320–400 (IQLWQFLLEL…QGKRFVYKFV (81 aa)) form a DNA-binding region, ETS.

Belongs to the ETS family. As to quaternary structure, heterotetramer of two alpha and two beta subunits.

It is found in the nucleus. Its function is as follows. Transcription factor capable of interacting with purine rich repeats (GA repeats). Positively regulates transcription of transcriptional repressor RHIT/ZNF205. (Microbial infection) Necessary for the expression of the Adenovirus E4 gene. This Homo sapiens (Human) protein is GA-binding protein alpha chain (GABPA).